A 150-amino-acid polypeptide reads, in one-letter code: Calmodulin (150 aa).

EF-hand domains are found at residues 9–44 (EQIA…LGQS), 45–80 (PTAA…KMKD), 82–117 (DNEE…LGER), and 118–150 (LSQE…ISSK). Ca(2+) is bound by residues Asp22, Asp24, Asp26, Asn28, Glu33, Asp58, Asp60, Asn62, Thr64, Glu69, Asp95, Asp97, Asn99, Tyr101, Glu106, Asp131, Asp133, Asp135, and Glu142.

It belongs to the calmodulin family. Interacts with rng2.

The protein localises to the cytoplasm. The protein resides in the cytoskeleton. It localises to the microtubule organizing center. It is found in the spindle pole body. In terms of biological role, calmodulin mediates the control of a large number of enzymes, ion channels and other proteins by Ca(2+). Among the enzymes to be stimulated by the calmodulin-Ca(2+) complex are a number of protein kinases and phosphatases. This Schizosaccharomyces pombe (strain 972 / ATCC 24843) (Fission yeast) protein is Calmodulin (cam1).